The sequence spans 490 residues: DNA-binding protein D-ETS-3 (490 aa).

Disordered stretches follow at residues 190-255 (TASS…SGGG) and 271-294 (SSTQ…SQLR). The segment covering 196–207 (HVEHKVRADKST) has biased composition (basic and acidic residues). Over residues 211–227 (ATTSSHAAAPSSSSSAS) the composition is skewed to low complexity. The span at 244-255 (GTGGGASASGGG) shows a compositional bias: gly residues. Over residues 271-280 (SSTQSQGYSS) the composition is skewed to low complexity. The ETS DNA-binding region spans 317-397 (IQLWQFLLEL…HGKRYAYKFD (81 aa)).

Belongs to the ETS family. In terms of tissue distribution, embryonic ventral nervous system, higher in the thoracic than abdominal segments.

It is found in the nucleus. The sequence is that of DNA-binding protein D-ETS-3 (Ets65A) from Drosophila melanogaster (Fruit fly).